A 345-amino-acid polypeptide reads, in one-letter code: Dihydroorotate dehydrogenase (quinone) (345 aa).

FMN-binding positions include Ala65 to Lys69 and Thr89. Substrate is bound at residue Lys69. Residue Asn114 to Phe118 participates in substrate binding. Asn142 and Asn175 together coordinate FMN. Asn175 serves as a coordination point for substrate. Ser178 functions as the Nucleophile in the catalytic mechanism. Asn180 provides a ligand contact to substrate. Residues Lys220 and Thr248 each contribute to the FMN site. A substrate-binding site is contributed by Asn249–Thr250. FMN-binding positions include Gly271, Gly300, and Tyr321–Thr322.

This sequence belongs to the dihydroorotate dehydrogenase family. Type 2 subfamily. Monomer. It depends on FMN as a cofactor.

Its subcellular location is the cell membrane. It carries out the reaction (S)-dihydroorotate + a quinone = orotate + a quinol. It participates in pyrimidine metabolism; UMP biosynthesis via de novo pathway; orotate from (S)-dihydroorotate (quinone route): step 1/1. Its function is as follows. Catalyzes the conversion of dihydroorotate to orotate with quinone as electron acceptor. The sequence is that of Dihydroorotate dehydrogenase (quinone) from Burkholderia mallei (strain NCTC 10247).